We begin with the raw amino-acid sequence, 165 residues long: Glycine cleavage system H protein, mitochondrial (165 aa).

The transit peptide at 1–34 (MALRMWASSTANALKLSSSSRLHLSPTFSISRCF) directs the protein to the mitochondrion. The region spanning 56–138 (VATIGITDHA…YEDGWMIKIK (83 aa)) is the Lipoyl-binding domain. Lysine 97 carries the N6-lipoyllysine modification.

It belongs to the GcvH family. The glycine cleavage system is composed of four proteins: P, T, L and H. Requires (R)-lipoate as cofactor.

It localises to the mitochondrion. In terms of biological role, the glycine cleavage system catalyzes the degradation of glycine. The H protein shuttles the methylamine group of glycine from the P protein to the T protein. This is Glycine cleavage system H protein, mitochondrial (GDCSH) from Pisum sativum (Garden pea).